Reading from the N-terminus, the 251-residue chain is Malonyl-[acyl-carrier protein] O-methyltransferase (251 aa).

Belongs to the methyltransferase superfamily.

It catalyses the reaction malonyl-[ACP] + S-adenosyl-L-methionine = malonyl-[ACP] methyl ester + S-adenosyl-L-homocysteine. It participates in cofactor biosynthesis; biotin biosynthesis. Converts the free carboxyl group of a malonyl-thioester to its methyl ester by transfer of a methyl group from S-adenosyl-L-methionine (SAM). It allows to synthesize pimeloyl-ACP via the fatty acid synthetic pathway. This Salmonella typhimurium (strain LT2 / SGSC1412 / ATCC 700720) protein is Malonyl-[acyl-carrier protein] O-methyltransferase.